We begin with the raw amino-acid sequence, 1197 residues long: PAN2-PAN3 deadenylation complex catalytic subunit PAN2 (1197 aa).

4 WD repeats span residues 153 to 193 (DEAE…QKYT), 195 to 231 (EVPG…VEHE), 244 to 280 (VHGN…ATTP), and 328 to 367 (TVGP…TFNT). A linker region spans residues 368–485 (YSRETDFALP…IGREEEPHLY (118 aa)). Positions 486–919 (MVAKKYRKVT…VPAILYYARR (434 aa)) constitute a USP domain. One can recognise an Exonuclease domain in the interval 970 to 1142 (VGLDAEFVTL…EDARTALQLY (173 aa)). Residues Asp973, Glu975, Asp1082, and Asp1134 each coordinate a divalent metal cation. The interval 1176 to 1197 (VPEPDSQSSPKHGAVFPPVLAL) is disordered.

Belongs to the peptidase C19 family. PAN2 subfamily. Forms a heterotrimer with an asymmetric homodimer of the regulatory subunit PAN3 to form the poly(A)-nuclease (PAN) deadenylation complex. A divalent metal cation is required as a cofactor.

The protein resides in the cytoplasm. It localises to the P-body. It is found in the nucleus. The enzyme catalyses Exonucleolytic cleavage of poly(A) to 5'-AMP.. With respect to regulation, positively regulated by the regulatory subunit PAN3. Catalytic subunit of the poly(A)-nuclease (PAN) deadenylation complex, one of two cytoplasmic mRNA deadenylases involved in general and miRNA-mediated mRNA turnover. PAN specifically shortens poly(A) tails of RNA and the activity is stimulated by poly(A)-binding protein (PABP). PAN deadenylation is followed by rapid degradation of the shortened mRNA tails by the CCR4-NOT complex. Deadenylated mRNAs are then degraded by two alternative mechanisms, namely exosome-mediated 3'-5' exonucleolytic degradation, or deadenylation-dependent mRNA decaping and subsequent 5'-3' exonucleolytic degradation by XRN1. The chain is PAN2-PAN3 deadenylation complex catalytic subunit PAN2 from Gallus gallus (Chicken).